The following is a 256-amino-acid chain: Thiazole synthase (256 aa).

The active-site Schiff-base intermediate with DXP is K95. 1-deoxy-D-xylulose 5-phosphate-binding positions include G156, 182-183, and 204-205; these read AG and NT.

Belongs to the ThiG family. As to quaternary structure, homotetramer. Forms heterodimers with either ThiH or ThiS.

It localises to the cytoplasm. The catalysed reaction is [ThiS sulfur-carrier protein]-C-terminal-Gly-aminoethanethioate + 2-iminoacetate + 1-deoxy-D-xylulose 5-phosphate = [ThiS sulfur-carrier protein]-C-terminal Gly-Gly + 2-[(2R,5Z)-2-carboxy-4-methylthiazol-5(2H)-ylidene]ethyl phosphate + 2 H2O + H(+). It functions in the pathway cofactor biosynthesis; thiamine diphosphate biosynthesis. Its function is as follows. Catalyzes the rearrangement of 1-deoxy-D-xylulose 5-phosphate (DXP) to produce the thiazole phosphate moiety of thiamine. Sulfur is provided by the thiocarboxylate moiety of the carrier protein ThiS. In vitro, sulfur can be provided by H(2)S. The protein is Thiazole synthase of Klebsiella pneumoniae subsp. pneumoniae (strain ATCC 700721 / MGH 78578).